Consider the following 213-residue polypeptide: Thymidylate kinase (213 aa).

11 to 18 (GPDGAGKT) is an ATP binding site.

Belongs to the thymidylate kinase family.

The enzyme catalyses dTMP + ATP = dTDP + ADP. Phosphorylation of dTMP to form dTDP in both de novo and salvage pathways of dTTP synthesis. This chain is Thymidylate kinase, found in Oenococcus oeni (strain ATCC BAA-331 / PSU-1).